A 207-amino-acid chain; its full sequence is Protein lin-7 homolog B (207 aa).

The short motif at 1-13 (MAALVEPLGLERD) is the Kinase interacting site element. The L27 domain occupies 10 to 65 (LERDVSRAVELLERLQRSGELPPQKLQALQRVLQSRFCSAIREVYEQLYDTLDITG). The PDZ domain occupies 93 to 175 (VVELPKTDEG…SVKLVVRYTP (83 aa)). Residues 187–207 (KMRSARRRQQHHSYSSLESRG) are disordered. Polar residues predominate over residues 198–207 (HSYSSLESRG).

This sequence belongs to the lin-7 family. In terms of assembly, forms two exclusive ternary complexes with CASK and CASKIN1. The brain-specific heterotrimeric complex (LIN-10-LIN-2-LIN-7 complex) composed of at least APBA1, CASK, and LIN7, associates with the motor protein KIF17 to transport vesicles along microtubules. Forms a heterotrimeric complex composed of MMP5, LIN7B and PATJ; the N-terminal L27 domain of PALS1 interacts with the L27 domain of PATJ and the C-terminal L27 domain of PALS1 interacts with the L27 domain of LIN7B. Forms a heterotrimeric complex with DLG1 and CASK via their L27 domains. Interacts with DLG4 and GRIN2B as well as CDH1 and CTNNB1, the channels KCNJ12/Kir2.2, KCNJ4/Kir2.3 and probably KCNJ2/Kir2.1 and SLC6A12/BGT-1 via its PDZ domain. The association of LIN7A with cadherin and beta-catenin is calcium-dependent, occurs at synaptic junctions and requires the actin cytoskeleton. Interacts with EGFR, ERBB2, ERBB3 and ERBB4 with both PDZ and KID domains. Associates with KIF17 via APBA1. Interacts with ASIC3. Interacts with TOPK. Interacts with RTKN. Interacts with APBA1. Interacts with MPP7. Interacts with DLG2. Interacts with DLG3. As to expression, expressed only in brain.

Its subcellular location is the cell membrane. The protein localises to the basolateral cell membrane. It localises to the cell junction. The protein resides in the postsynaptic density membrane. It is found in the tight junction. Its function is as follows. Plays a role in establishing and maintaining the asymmetric distribution of channels and receptors at the plasma membrane of polarized cells. Forms membrane-associated multiprotein complexes that may regulate delivery and recycling of proteins to the correct membrane domains. The tripartite complex composed of LIN7 (LIN7A, LIN7B or LIN7C), CASK and APBA1 associates with the motor protein KIF17 to transport vesicles containing N-methyl-D-aspartate (NMDA) receptor subunit NR2B along microtubules. This complex may have the potential to couple synaptic vesicle exocytosis to cell adhesion in brain. Ensures the proper localization of GRIN2B (subunit 2B of the NMDA receptor) to neuronal postsynaptic density and may function in localizing synaptic vesicles at synapses where it is recruited by beta-catenin and cadherin. Required to localize Kir2 channels, GABA transporter (SLC6A12) and EGFR/ERBB1, ERBB2, ERBB3 and ERBB4 to the basolateral membrane of epithelial cells. May increase the amplitude of ASIC3 acid-evoked currents by stabilizing the channel at the cell surface. The sequence is that of Protein lin-7 homolog B (Lin7b) from Rattus norvegicus (Rat).